We begin with the raw amino-acid sequence, 561 residues long: Potassium-transporting ATPase potassium-binding subunit (561 aa).

12 consecutive transmembrane segments (helical) span residues 2–22 (GLGL…TPVL), 65–85 (YIRA…SLIH), 135–155 (ALGF…IAFI), 177–197 (ILLP…VPQT), 253–273 (FIET…YGVF), 280–300 (AWLL…VAAT), 327–347 (FGWA…CGAV), 353–373 (ALMP…IIWG), 378–398 (GTAY…LMVG), 413–433 (IVLA…PSAI), 482–502 (LSTS…MLLL), and 531–551 (AGIV…LGPI).

The protein belongs to the KdpA family. As to quaternary structure, the system is composed of three essential subunits: KdpA, KdpB and KdpC.

The protein localises to the cell membrane. Functionally, part of the high-affinity ATP-driven potassium transport (or Kdp) system, which catalyzes the hydrolysis of ATP coupled with the electrogenic transport of potassium into the cytoplasm. This subunit binds the extracellular potassium ions and delivers the ions to the membrane domain of KdpB through an intramembrane tunnel. In Anabaena sp. (strain L31), this protein is Potassium-transporting ATPase potassium-binding subunit.